Reading from the N-terminus, the 128-residue chain is NHP2-like protein 1 (128 aa).

M1 carries the N-acetylmethionine modification. The residue at position 2 (T2) is an N-acetylthreonine; in NHP2-like protein 1, N-terminally processed. An N6-acetyllysine modification is found at K21. Positions 36-48 are interaction with U4 snRNA and U4atac snRNA; sequence RKGANEATKTLNR. An important for U4 snRNA-binding region spans residues 96–128; sequence SRPVIACSVTIKEGSQLKQQIQSIQQSIERLLV. S122 bears the Phosphoserine mark.

Belongs to the eukaryotic ribosomal protein eL8 family. Identified in the spliceosome B complex. Component of the U4/U6-U5 tri-snRNP complex composed of the U4, U6 and U5 snRNAs and at least PRPF3, PRPF4, PRPF6, PRPF8, PRPF31, SNRNP200, TXNL4A, WDR57, SNRNP40, DDX23, CD2BP2, PPIH, NHP2L1, EFTUD2, SART1 and USP39. Interacts with RAD17 and PRPF31. The complex formed by SNU13 and PRPF31 binds U4 snRNA. The complex formed by SNU13 and PRPF31 also binds U4atac snRNA, a characteristic component of specific, less abundant spliceosomal complexes. Part of the small subunit (SSU) processome, composed of more than 70 proteins and the RNA chaperone small nucleolar RNA (snoRNA) U3. Core component of box C/D small nucleolar ribonucleoprotein (snoRNP) particles; the core proteins SNU13, NOP56, NOP58 and FBL or FBLL1 assemble stepwise onto the snoRNA.

The protein localises to the nucleus. The protein resides in the nucleolus. Part of the small subunit (SSU) processome, first precursor of the small eukaryotic ribosomal subunit. During the assembly of the SSU processome in the nucleolus, many ribosome biogenesis factors, an RNA chaperone and ribosomal proteins associate with the nascent pre-rRNA and work in concert to generate RNA folding, modifications, rearrangements and cleavage as well as targeted degradation of pre-ribosomal RNA by the RNA exosome. Involved in pre-mRNA splicing as component of the spliceosome. Binds to the 5'-stem-loop of U4 snRNA and thereby contributes to spliceosome assembly. The protein undergoes a conformational change upon RNA-binding. Core component of box C/D small nucleolar ribonucleoprotein (snoRNP) complexes that function in methylation of multiple sites on ribosomal RNAs (rRNAs) and messenger RNAs (mRNAs). This Bos taurus (Bovine) protein is NHP2-like protein 1.